The primary structure comprises 254 residues: Cell division protein FtsQ (254 aa).

The Cytoplasmic portion of the chain corresponds to methionine 1–alanine 27. Residues phenylalanine 28–leucine 48 form a helical membrane-spanning segment. Topologically, residues glutamate 49–arginine 254 are periplasmic. One can recognise a POTRA domain in the interval lysine 54–tyrosine 124.

The protein belongs to the FtsQ/DivIB family. FtsQ subfamily. As to quaternary structure, part of a complex composed of FtsB, FtsL and FtsQ.

The protein localises to the cell inner membrane. In terms of biological role, essential cell division protein. May link together the upstream cell division proteins, which are predominantly cytoplasmic, with the downstream cell division proteins, which are predominantly periplasmic. May control correct divisome assembly. The chain is Cell division protein FtsQ from Haemophilus influenzae (strain ATCC 51907 / DSM 11121 / KW20 / Rd).